A 357-amino-acid polypeptide reads, in one-letter code: Leucoanthocyanidin dioxygenase (357 aa).

In terms of domain architecture, Fe2OG dioxygenase spans 212–311 (LLLQMKINYY…RISWAVFCEP (100 aa)). Histidine 236, aspartate 238, and histidine 292 together coordinate Fe cation.

The protein belongs to the iron/ascorbate-dependent oxidoreductase family. It depends on Fe cation as a cofactor. L-ascorbate serves as cofactor.

The catalysed reaction is a (2R,3S,4S)-leucoanthocyanidin + 2-oxoglutarate + O2 = a 4-H-anthocyanidin with a 3-hydroxy group + succinate + CO2 + 2 H2O. It participates in pigment biosynthesis; anthocyanin biosynthesis. In terms of biological role, oxidation of leucoanthocyanidins into anthocyanidins. In Malus domestica (Apple), this protein is Leucoanthocyanidin dioxygenase (ANS).